The sequence spans 472 residues: Eukaryotic translation initiation factor 2 subunit 3 (472 aa).

The tr-type G domain maps to 39-247 (QATINIGTIG…YIVNKIPVPV (209 aa)). Positions 48-55 (GHVAHGKS) are G1. 51-56 (AHGKST) contacts GTP. The G2 stretch occupies residues 76–80 (NITIK). Residues 134-137 (DCPG) are G3. GTP contacts are provided by residues 190 to 193 (NKID) and 225 to 227 (SAQ). A G4 region spans residues 190 to 193 (NKID). The segment at 225 to 227 (SAQ) is G5. Residues 457–469 (GQIRRGVTITPTV) form an interacts with cdc123 region.

Belongs to the TRAFAC class translation factor GTPase superfamily. Classic translation factor GTPase family. EIF2G subfamily. As to quaternary structure, eukaryotic translation initiation factor 2 eIF2 is a heterotrimeric complex composed of an alpha (EIF2S1), a beta (EIF2S2) and a gamma (EIF2S3) chain. eIF2 is member of the 43S pre-initiation complex (43S PIC).

Its subcellular location is the cytoplasm. It is found in the cytosol. It carries out the reaction GTP + H2O = GDP + phosphate + H(+). Functionally, member of the eIF2 complex that functions in the early steps of protein synthesis by forming a ternary complex with GTP and initiator tRNA. This complex binds to a 40S ribosomal subunit, followed by mRNA binding to form the 43S pre-initiation complex (43S PIC). Junction of the 60S ribosomal subunit to form the 80S initiation complex is preceded by hydrolysis of the GTP bound to eIF2 and release of an eIF2-GDP binary complex. In order for eIF2 to recycle and catalyze another round of initiation, the GDP bound to eIF2 must exchange with GTP by way of a reaction catalyzed by eIF-2B. This is Eukaryotic translation initiation factor 2 subunit 3 from Danio rerio (Zebrafish).